A 1047-amino-acid polypeptide reads, in one-letter code: MGAAKKPAAAGVSTKAEREADLVMETNNSSIVSKRSVELLYYPKPHFFRYFVKRPPRRSPLINRGYWLRMHAMAESVRQFMKQPSDKPKFVLNLGCGFDPLPFILLSTDKSLCSTTRFVDIDYEKLMVNKKTAIRRTDEITRLLENVEFLSDESPIQIRSEQYLAIGCDLKNLKKLDDVLKTELLPSDCSILFLAEVSLTYMDVKSANAVLAWASKLNNDSQFCILEQFFPDGPNHPFASTMMKHFNKLGAPLYSIHEYRSLSEQEQRFRNAGWAHAQARSLWDLWSDNEFVGSSLRAWLDTVEPFDEWEEFALFASHYFLLVASTKPQTMVQELQKTPALTTEPDISSQYVLLAGNNPRGGQRRFGALIPDSENSMGHHSGLGRQTRDVSTDLYSTCKGMTTPQLPFPPREVSARMCHTVTSLRGGDCLLVGGRASPANAFQDCWLRQGKQWQSTKSLPAPRFRHSAVKITLETDSESVLVYGGKSSDGSIFDTWLLWQTHSNGWQEVEIQGARPPARFGACLESINQTTGVLFGGIGSDGIIIEDFWIWKIRHRSDGTVFLELTDHTEHLQQTPLSQYIYRFGSTVTRTSRGLVIVGGIIPRQIVPYECEIMLLDVGELLEYVENESSWGHRILSAIGLGGILQGARPLLVGHVACAIDPDQVLILGGGAVCFSFGTFWTEGGWVLKPAGSTAQNNWTLVPEAMHTPEPVASPKTPQISTALKLSSIRRIRVDTSEQFQQILADGKPVIIEGSDIGPCTELWTKEYLTDVVGSDRKVVVHESQSENMNFQAKNFSYVTKAFGDFLDEVHAGGRQYLRSISAELPSKLPANLAADFPGLKDDFKLPQALSLVTENAHSSPLRISGPVTMWLHYDVSSNTKQEGWKLRVADRYAQVMANVLCQIRGERRLVLFPPADVQYLQVPPGASSSTIDIFQNIKDGSIVSIPHTSPQEAVLNSGDILFIPPMWLHTASPTGGVSVAVNVFFRSLPKGYAAGRDVYGNRDLQAYEKARIDIQKMVRSFDGLPSDISRFYLLRLAQELKDNAGV.

Residues R69, G95, D122, 169 to 170 (DL), and E196 each bind S-adenosyl-L-methionine. Positions 814–1003 (GRQYLRSISA…AAGRDVYGNR (190 aa)) constitute a JmjC domain.

Belongs to the methyltransferase superfamily. LCMT family.

The catalysed reaction is 7-[(3S)-3-amino-3-carboxypropyl]wyosine(37) in tRNA(Phe) + S-adenosyl-L-methionine = 7-[(3S)-(3-amino-3-methoxycarbonyl)propyl]wyosine(37) in tRNA(Phe) + S-adenosyl-L-homocysteine. It catalyses the reaction 7-[(3S)-(3-amino-3-methoxycarbonyl)propyl]wyosine(37) in tRNA(Phe) + S-adenosyl-L-methionine + CO2 = wybutosine(37) in tRNA(Phe) + S-adenosyl-L-homocysteine + 2 H(+). Its pathway is tRNA modification; wybutosine-tRNA(Phe) biosynthesis. In terms of biological role, probable S-adenosyl-L-methionine-dependent methyltransferase that acts as a component of the wybutosine biosynthesis pathway. Wybutosine is a hyper modified guanosine with a tricyclic base found at the 3'-position adjacent to the anticodon of eukaryotic phenylalanine tRNA. May methylate the carboxyl group of leucine residues to form alpha-leucine ester residues. The sequence is that of tRNA wybutosine-synthesizing protein 4 (ppm2) from Aspergillus fumigatus (strain ATCC MYA-4609 / CBS 101355 / FGSC A1100 / Af293) (Neosartorya fumigata).